The following is a 71-amino-acid chain: DNA-directed RNA polymerase subunit omega (71 aa).

It belongs to the RNA polymerase subunit omega family. The RNAP catalytic core consists of 2 alpha, 1 beta, 1 beta' and 1 omega subunit. When a sigma factor is associated with the core the holoenzyme is formed, which can initiate transcription.

The catalysed reaction is RNA(n) + a ribonucleoside 5'-triphosphate = RNA(n+1) + diphosphate. Functionally, promotes RNA polymerase assembly. Latches the N- and C-terminal regions of the beta' subunit thereby facilitating its interaction with the beta and alpha subunits. The protein is DNA-directed RNA polymerase subunit omega of Campylobacter concisus (strain 13826).